Consider the following 296-residue polypeptide: Phosphatidylglycerol--prolipoprotein diacylglyceryl transferase (296 aa).

4 helical membrane passes run Ile-10–Phe-30, Leu-57–Tyr-77, Val-92–Leu-112, and Leu-119–Gly-139. Arg-140 is a binding site for a 1,2-diacyl-sn-glycero-3-phospho-(1'-sn-glycerol). 3 helical membrane-spanning segments follow: residues Gln-194–Met-214, Tyr-220–Val-240, and Trp-254–Ala-274.

Belongs to the Lgt family.

The protein resides in the cell inner membrane. The catalysed reaction is L-cysteinyl-[prolipoprotein] + a 1,2-diacyl-sn-glycero-3-phospho-(1'-sn-glycerol) = an S-1,2-diacyl-sn-glyceryl-L-cysteinyl-[prolipoprotein] + sn-glycerol 1-phosphate + H(+). It functions in the pathway protein modification; lipoprotein biosynthesis (diacylglyceryl transfer). Functionally, catalyzes the transfer of the diacylglyceryl group from phosphatidylglycerol to the sulfhydryl group of the N-terminal cysteine of a prolipoprotein, the first step in the formation of mature lipoproteins. In Xanthomonas axonopodis pv. citri (strain 306), this protein is Phosphatidylglycerol--prolipoprotein diacylglyceryl transferase.